Consider the following 971-residue polypeptide: Breast cancer type 2 susceptibility protein homolog (971 aa).

The segment covering 1 to 15 (MDQNGASGSHPNRLS) has biased composition (polar residues). 4 disordered regions span residues 1-30 (MDQN…ATVS), 130-155 (SRKR…LSVQ), 349-395 (KLKL…DQPN), and 420-466 (MQCS…SSHQ). Over residues 130 to 139 (SRKRDPKSHK) the composition is skewed to basic residues. The segment covering 349-364 (KLKLEPSSQKEQKSSK) has biased composition (basic and acidic residues). 3 stretches are compositionally biased toward polar residues: residues 375-392 (SKQS…TILD), 420-432 (MQCS…SKNA), and 453-466 (KQTP…SSHQ). BRCA2 repeat units lie at residues 570-604 (AEPE…EFQS), 671-705 (NESQ…QSKA), and 746-780 (SETE…EFQA). The tract at residues 916 to 971 (MERFAPKPSSTSTPLADRDLNRSKDCTKNRQDAEDMSPICMQPKKSRRLGLSRSRY) is disordered. Residues 931–948 (ADRDLNRSKDCTKNRQDA) are compositionally biased toward basic and acidic residues. Residues 959–971 (KKSRRLGLSRSRY) are compositionally biased toward basic residues.

As to quaternary structure, interacts with Rad9. Interacts with spn-A/Rad51. Interacts with cyclin CycG.

The protein localises to the nucleus. Its function is as follows. Involved in and required for double-strand break repair by meiotic and mitotic homologous recombination. During meiosis, has a dual role in the repair of meiotic double-stranded breaks and the efficient activation of the meiotic recombination checkpoint. In Drosophila melanogaster (Fruit fly), this protein is Breast cancer type 2 susceptibility protein homolog.